The chain runs to 205 residues: Proteasome subunit beta type-3 (205 aa).

Position 2 is an N-acetylserine (Ser2). Residue Lys77 is modified to N6-acetyllysine.

This sequence belongs to the peptidase T1B family. In terms of assembly, the 26S proteasome consists of a 20S proteasome core and two 19S regulatory subunits. The 20S proteasome core is a barrel-shaped complex made of 28 subunits that are arranged in four stacked rings. The two outer rings are each formed by seven alpha subunits, and the two inner rings are formed by seven beta subunits. The proteolytic activity is exerted by three beta-subunits PSMB5, PSMB6 and PSMB7.

The protein localises to the cytoplasm. It is found in the nucleus. Functionally, non-catalytic component of the 20S core proteasome complex involved in the proteolytic degradation of most intracellular proteins. This complex plays numerous essential roles within the cell by associating with different regulatory particles. Associated with two 19S regulatory particles, forms the 26S proteasome and thus participates in the ATP-dependent degradation of ubiquitinated proteins. The 26S proteasome plays a key role in the maintenance of protein homeostasis by removing misfolded or damaged proteins that could impair cellular functions, and by removing proteins whose functions are no longer required. Associated with the PA200 or PA28, the 20S proteasome mediates ubiquitin-independent protein degradation. This type of proteolysis is required in several pathways including spermatogenesis (20S-PA200 complex) or generation of a subset of MHC class I-presented antigenic peptides (20S-PA28 complex). This Rattus norvegicus (Rat) protein is Proteasome subunit beta type-3 (Psmb3).